Here is a 504-residue protein sequence, read N- to C-terminus: SPbeta prophage-derived uncharacterized protein YorI (504 aa).

This is SPbeta prophage-derived uncharacterized protein YorI (yorI) from Bacillus subtilis (strain 168).